A 939-amino-acid polypeptide reads, in one-letter code: cGMP-dependent 3',5'-cyclic phosphodiesterase (939 aa).

Gly2 is lipidated: N-myristoyl glycine. Residues Cys5 and Cys11 are each lipidated (S-palmitoyl cysteine). The disordered stretch occupies residues 16–38; that stretch reads YPAARPAEPRGQQVFLKPDEPPP. At Ser116 the chain carries Phosphoserine. The interval 197–217 is disordered; it reads PEAVQNTSVDASEDQKDEKGY. GAF domains lie at 236–373 and 408–547; these read ATSL…HYTG and DVSV…GISI. Residues Ser430, Asp445, Ile464, Tyr487, and Thr498 each coordinate 3',5'-cyclic GMP. The region spanning 577-901 is the PDEase domain; sequence SDDEYTKLLH…EHWTKVSHKF (325 aa). Residue His655 is the Proton donor of the active site. His659, His695, Asp696, and Asp807 together coordinate Zn(2+). Residue Asp696 participates in Mg(2+) binding.

It belongs to the cyclic nucleotide phosphodiesterase family. PDE2 subfamily. Homodimer. It depends on Zn(2+) as a cofactor. Mg(2+) is required as a cofactor. As to expression, expressed in brain and liver (at protein level).

It is found in the cytoplasm. The protein localises to the mitochondrion matrix. The protein resides in the mitochondrion inner membrane. Its subcellular location is the mitochondrion outer membrane. It localises to the cell membrane. It catalyses the reaction a nucleoside 3',5'-cyclic phosphate + H2O = a nucleoside 5'-phosphate + H(+). The catalysed reaction is 3',5'-cyclic GMP + H2O = GMP + H(+). It carries out the reaction 3',5'-cyclic AMP + H2O = AMP + H(+). Its activity is regulated as follows. The 3',5'-cyclic-AMP phosphodiesterase activity is stimulated by 3',5'-cyclic GMP. Specifically inhibited by Bay 60-7550. Functionally, cGMP-activated cyclic nucleotide phosphodiesterase with a dual-specificity for the second messengers cAMP and cGMP, which are key regulators of many important physiological processes. Has a higher efficiency with cGMP compared to cAMP. Plays a role in cell growth and migration. Regulates mitochondrial cAMP levels and respiration. Involved in the regulation of mitochondria morphology/dynamics and apoptotic cell death via local modulation of cAMP/PKA signaling in the mitochondrion, including the monitoring of local cAMP levels at the outer mitochondrial membrane and of PKA-dependent phosphorylation of DNM1L. The protein is cGMP-dependent 3',5'-cyclic phosphodiesterase of Mus musculus (Mouse).